The sequence spans 426 residues: Enolase (426 aa).

Gln163 is a (2R)-2-phosphoglycerate binding site. The Proton donor role is filled by Glu205. Residues Asp242, Glu283, and Asp310 each coordinate Mg(2+). (2R)-2-phosphoglycerate-binding residues include Lys335, Arg364, Ser365, and Lys386. Lys335 (proton acceptor) is an active-site residue.

The protein belongs to the enolase family. The cofactor is Mg(2+).

It localises to the cytoplasm. Its subcellular location is the secreted. It is found in the cell surface. The catalysed reaction is (2R)-2-phosphoglycerate = phosphoenolpyruvate + H2O. The protein operates within carbohydrate degradation; glycolysis; pyruvate from D-glyceraldehyde 3-phosphate: step 4/5. Its function is as follows. Catalyzes the reversible conversion of 2-phosphoglycerate (2-PG) into phosphoenolpyruvate (PEP). It is essential for the degradation of carbohydrates via glycolysis. This chain is Enolase, found in Cutibacterium acnes (strain DSM 16379 / KPA171202) (Propionibacterium acnes).